The following is a 325-amino-acid chain: Tetraacyldisaccharide 4'-kinase (325 aa).

55 to 62 (TAGGNGKT) is a binding site for ATP.

It belongs to the LpxK family.

The catalysed reaction is a lipid A disaccharide + ATP = a lipid IVA + ADP + H(+). Its pathway is glycolipid biosynthesis; lipid IV(A) biosynthesis; lipid IV(A) from (3R)-3-hydroxytetradecanoyl-[acyl-carrier-protein] and UDP-N-acetyl-alpha-D-glucosamine: step 6/6. Functionally, transfers the gamma-phosphate of ATP to the 4'-position of a tetraacyldisaccharide 1-phosphate intermediate (termed DS-1-P) to form tetraacyldisaccharide 1,4'-bis-phosphate (lipid IVA). The chain is Tetraacyldisaccharide 4'-kinase from Salmonella paratyphi B (strain ATCC BAA-1250 / SPB7).